The primary structure comprises 77 residues: Apelin (77 aa).

The first 22 residues, 1–22 (MNLRLCVQALLLLWLSLTAVCG), serve as a signal peptide directing secretion. Residues 23–41 (VPLMLPPDGTGLEEGSMRY) constitute a propeptide that is removed on maturation. Residues 46–77 (RTSRTGPGAWQGGRRKFRRQRPRLSHKGPMPF) form a disordered region. A compositionally biased stretch (basic residues) spans 58-71 (GRRKFRRQRPRLSH).

This sequence belongs to the apelin family. Post-translationally, several active peptides may be produced by proteolytic processing of the peptide precursor. Expressed in extraembryonic visceral endoderm and in the primitive streak at 6.5 and 7.5 dpc. Expressed in the anterior visceral yolk sac at 8.25 dpc. Expressed weakly in the embryonic heart at 11.5 dpc. Expressed in the adult heart. Expressed in endothelial cells and cardiomyocytes and weakly expressed in fibroblasts.

The protein localises to the secreted. The protein resides in the extracellular space. Functionally, peptide hormone that functions as endogenous ligand for the G-protein-coupled apelin receptor (APLNR/APJ). Functions as a balanced agonist activating both G(i) protein pathway and beta-arrestin pathway of APLNR. Downstream G proteins activation, apelin can inhibit cAMP production and activate key intracellular effectors such as ERKs. On the other hand, APLNR activation induces beta-arrestin recruitment to the membrane leading to desensitization and internalization of the receptor. Apelin also blunts mechanical stretch-induced hypertrophic induction from APLNR. Apelin-36 dissociates more hardly than (pyroglu)apelin-13 from APLNR. Involved in the regulation of cardiac precursor cell movements during gastrulation and heart morphogenesis. Has an inhibitory effect on cytokine production in response to T-cell receptor/CD3 cross-linking; the oral intake of apelin in the colostrum and the milk might therefore modulate immune responses in neonates. Plays a role in early coronary blood vessels formation. Mediates myocardial contractility in an ERK1/2-dependent manner. May also have a role in the central control of body fluid homeostasis by influencing vasopressin release and drinking behavior. The polypeptide is Apelin (Mus musculus (Mouse)).